We begin with the raw amino-acid sequence, 180 residues long: Diphosphoinositol polyphosphate phosphohydrolase 2 (180 aa).

Met-1 bears the N-acetylmethionine mark. Substrate is bound by residues Arg-10, 18–20 (KKR), and 39–41 (SSR). In terms of domain architecture, Nudix hydrolase spans 18–144 (KKRAACLCFR…VHAEYLEKLK (127 aa)). Mg(2+)-binding residues include Gly-50 and Glu-66. Residues 51-72 (GGMEPEEEPGGAAVREVYEEAG) carry the Nudix box motif. Glu-69 serves as the catalytic Proton acceptor. Glu-70 is a binding site for Mg(2+). Residues 89-91 (RKH), Arg-115, and Lys-133 contribute to the substrate site.

It belongs to the Nudix hydrolase family. DIPP subfamily. Requires Mg(2+) as cofactor. It depends on Mn(2+) as a cofactor. As to expression, expressed in heart and, at lower level in skeletal muscle, pancreas and kidney.

It is found in the cytoplasm. It carries out the reaction diphospho-myo-inositol polyphosphate + H2O = myo-inositol polyphosphate + phosphate.. It catalyses the reaction 5-diphospho-1D-myo-inositol 1,2,3,4,6-pentakisphosphate + H2O = 1D-myo-inositol hexakisphosphate + phosphate + H(+). The catalysed reaction is 3,5-bis(diphospho)-1D-myo-inositol 1,2,4,6-tetrakisphosphate + H2O = 3-diphospho-1D-myo-inositol 1,2,4,5,6-pentakisphosphate + phosphate + 2 H(+). The enzyme catalyses 5-diphospho-1D-myo-inositol 1,3,4,6-tetrakisphosphate + H2O = 1D-myo-inositol 1,3,4,5,6-pentakisphosphate + phosphate + H(+). It carries out the reaction P(1),P(6)-bis(5'-adenosyl) hexaphosphate + H2O = 2 ATP + 2 H(+). It catalyses the reaction P(1),P(5)-bis(5'-adenosyl) pentaphosphate + H2O = ADP + ATP + 2 H(+). The catalysed reaction is 5-phospho-alpha-D-ribose 1-diphosphate + H2O = alpha-D-ribose 1,5-bisphosphate + phosphate + H(+). In terms of biological role, cleaves the beta-phosphate from diphosphoinositol polyphosphates such as PP-InsP5 (diphosphoinositol pentakisphosphate), PP-InsP4 (diphosphoinositol tetrakisphosphate) and [PP]2-InsP4 (bisdiphosphoinositol tetrakisphosphate), suggesting that it may play a role in signal transduction. Diadenosine polyphosphates, particularly Ap6A (P(1),P(6)-bis(5a-adenosyl) hexaphosphate) and Ap5A (P(1),P(5)-bis(5'-adenosyl) pentaphosphate) are downstream effectors of a signaling cascade that regulates cardiac KATP channels, can also be substrates, although with lower preference than the diphosphoinositol polyphosphates. Can also catalyze the hydrolysis of 5-phosphoribose 1-diphosphate, generating the glycolytic activator ribose 1,5-bisphosphate. Does not play a role in U8 snoRNA decapping activity. Binds U8 snoRNA. The protein is Diphosphoinositol polyphosphate phosphohydrolase 2 of Homo sapiens (Human).